The chain runs to 232 residues: Orotidine 5'-phosphate decarboxylase (232 aa).

Residues Asp-11, Lys-32, 59–68, Thr-118, Arg-180, Gln-189, Gly-209, and Arg-210 contribute to the substrate site; that span reads DLKFHDIPNT. Lys-61 serves as the catalytic Proton donor.

Belongs to the OMP decarboxylase family. Type 1 subfamily. In terms of assembly, homodimer.

The catalysed reaction is orotidine 5'-phosphate + H(+) = UMP + CO2. The protein operates within pyrimidine metabolism; UMP biosynthesis via de novo pathway; UMP from orotate: step 2/2. Its function is as follows. Catalyzes the decarboxylation of orotidine 5'-monophosphate (OMP) to uridine 5'-monophosphate (UMP). This is Orotidine 5'-phosphate decarboxylase from Gloeothece citriformis (strain PCC 7424) (Cyanothece sp. (strain PCC 7424)).